We begin with the raw amino-acid sequence, 746 residues long: Iron-sulfur clusters transporter ABCB7, mitochondrial (746 aa).

A mitochondrion-targeting transit peptide spans 1 to 19 (MAPMLVSLNCGIRVQRRTL). Residues 20–133 (TLLIRQTSSY…KDRPDLRARV (114 aa)) are Mitochondrial matrix-facing. Positions 133–429 (VAVSLGLLAG…LGTVYRETRQ (297 aa)) constitute an ABC transmembrane type-1 domain. A helical membrane pass occupies residues 134-154 (AVSLGLLAGAKLTNVMVPFMF). Residues 155 to 176 (KYAVDELNQMSGHMLNLNDAPS) lie on the Mitochondrial intermembrane side of the membrane. A helical membrane pass occupies residues 177 to 199 (TVATMTTAVLIGYGVSRAGSALF). Topologically, residues 200–252 (NELRNTVFGKVAQSSIRRIAKNVFLHLHNLDLGFHLSRQTGALSKAIDRGTRG) are mitochondrial matrix. The helical transmembrane segment at 253-273 (ISFVLSALVFNLGPTVFEMFL) threads the bilayer. Topologically, residues 274-283 (VSAILYYKCG) are mitochondrial intermembrane. Residues 284 to 304 (GEFAAVALGTLSAYTIFTILV) traverse the membrane as a helical segment. Residues 305-375 (TQWRTRFRIE…TLAMLNFGQS (71 aa)) lie on the Mitochondrial matrix side of the membrane. Residues 308-312 (RTRFR) and 371-374 (NFGQ) each bind glutathione. The helical transmembrane segment at 376 to 396 (AIFSVGLTAIMLLASKGIAAG) threads the bilayer. Residues 397–402 (NMTVGD) lie on the Mitochondrial intermembrane side of the membrane. Residues 403-423 (LVMVNGLLFQLSLPLNFLGTV) traverse the membrane as a helical segment. Glycine 421 provides a ligand contact to glutathione. Residues 424-746 (YRETRQALID…SVKGCGNCSC (323 aa)) are Mitochondrial matrix-facing. Positions 465-699 (IRFEDVYFEY…PGSLYAELWN (235 aa)) constitute an ABC transporter domain. Residues tyrosine 474 and 498-505 (GGSGSGKS) each bind ATP. The interval 708 to 728 (SRKSSSAPAAERLSQKEEERK) is disordered.

Belongs to the ABC transporter superfamily. ABCB family. Heavy Metal importer (TC 3.A.1.210) subfamily. Homodimer.

Its subcellular location is the mitochondrion inner membrane. The protein localises to the mitochondrion. It catalyses the reaction (glutathione)4[2Fe(III)-2S] cluster(in) + ATP + H2O = (glutathione)4[2Fe(III)-2S] cluster(out) + ADP + phosphate + H(+). Exports glutathione-coordinated iron-sulfur clusters such as [2Fe-2S]-(GS)4 cluster from the mitochondria to the cytosol in an ATP-dependent manner allowing the assembly of the cytosolic iron-sulfur (Fe/S) cluster-containing proteins and participates in iron homeostasis. May play a role in iron and lipid metabolism. In Oryzias latipes (Japanese rice fish), this protein is Iron-sulfur clusters transporter ABCB7, mitochondrial.